We begin with the raw amino-acid sequence, 178 residues long: ATP synthase subunit delta (178 aa).

It belongs to the ATPase delta chain family. In terms of assembly, F-type ATPases have 2 components, F(1) - the catalytic core - and F(0) - the membrane proton channel. F(1) has five subunits: alpha(3), beta(3), gamma(1), delta(1), epsilon(1). F(0) has three main subunits: a(1), b(2) and c(10-14). The alpha and beta chains form an alternating ring which encloses part of the gamma chain. F(1) is attached to F(0) by a central stalk formed by the gamma and epsilon chains, while a peripheral stalk is formed by the delta and b chains.

The protein resides in the cell inner membrane. Its function is as follows. F(1)F(0) ATP synthase produces ATP from ADP in the presence of a proton or sodium gradient. F-type ATPases consist of two structural domains, F(1) containing the extramembraneous catalytic core and F(0) containing the membrane proton channel, linked together by a central stalk and a peripheral stalk. During catalysis, ATP synthesis in the catalytic domain of F(1) is coupled via a rotary mechanism of the central stalk subunits to proton translocation. This protein is part of the stalk that links CF(0) to CF(1). It either transmits conformational changes from CF(0) to CF(1) or is implicated in proton conduction. The protein is ATP synthase subunit delta of Nitrosospira multiformis (strain ATCC 25196 / NCIMB 11849 / C 71).